A 174-amino-acid polypeptide reads, in one-letter code: Secretion monitor (174 aa).

An N-terminal signal peptide occupies residues 1–35 (MGILNLWRQFGRRYFWSHLLLGVVAASIGAPTILA).

It belongs to the SecM family.

It localises to the cytoplasm. Its subcellular location is the cytosol. It is found in the periplasm. Its function is as follows. Regulates secA expression by translational coupling of the secM secA operon. Translational pausing at a specific Pro residue 5 residues before the end of the protein may allow disruption of a mRNA repressor helix that normally suppresses secA translation initiation. The sequence is that of Secretion monitor from Photorhabdus laumondii subsp. laumondii (strain DSM 15139 / CIP 105565 / TT01) (Photorhabdus luminescens subsp. laumondii).